The chain runs to 415 residues: All trans-polyprenyl-diphosphate synthase PDSS1 (415 aa).

The segment at 16 to 35 is disordered; sequence PAARSPGPGSPGRAGPLGPS. Isopentenyl diphosphate is bound by residues K134, R137, and H173. 2 residues coordinate Mg(2+): D180 and D184. Residue R190 coordinates isopentenyl diphosphate.

This sequence belongs to the FPP/GGPP synthase family. In terms of assembly, heterotetramer composed of 2 PDSS1/DPS1 and 2 PDSS2/DLP1 subunits. The cofactor is Mg(2+).

It localises to the mitochondrion. It catalyses the reaction 7 isopentenyl diphosphate + (2E,6E)-farnesyl diphosphate = all-trans-decaprenyl diphosphate + 7 diphosphate. The enzyme catalyses 6 isopentenyl diphosphate + (2E,6E)-farnesyl diphosphate = all-trans-nonaprenyl diphosphate + 6 diphosphate. It participates in cofactor biosynthesis; ubiquinone biosynthesis. Functionally, heterotetrameric enzyme that catalyzes the condensation of farnesyl diphosphate (FPP), which acts as a primer, and isopentenyl diphosphate (IPP) to produce prenyl diphosphates of varying chain lengths and participates in the determination of the side chain of ubiquinone. Supplies nona and decaprenyl diphosphate, the precursors for the side chain of the isoprenoid quinones ubiquinone-9 (Q9)and ubiquinone-10 (Q10) respectively. The enzyme adds isopentenyl diphosphate molecules sequentially to farnesyl diphosphate with trans stereochemistry. The polypeptide is All trans-polyprenyl-diphosphate synthase PDSS1 (Homo sapiens (Human)).